The primary structure comprises 459 residues: MGKLFGTDGVRGVANSELTPELAFKLGRAGAYVLSKEAPQPRIVIGKDTRISGDMLEAALIAGITSVGGEALPVGVLPTPGIAYLTRKLKATAGVVISASHNPVADNGIKFFSASGFKLPDAVEEEIERYVLGEKGQSLDNVGGDAEGRHDDGLPAPTGALVGRVRPVADAETLFVEYLKSTVPVDFSGLKVVVDGANGAAYQVAPRILRELGAEVVTICCTPDGTNINDGCGSTHPEKLCEAVVAHGAHVGLAHDGDADRLIAVDEKGRIVDGDRIMVTCALHMKAKGQLPKDTVAVTVMSNMGLHLALKRAGIRILETKVGDRYVLEALLREGASFGGEQSGHILFLQHNTTGDGVLTGLQLLTVLKETGKPLSELAAQMEQLPQLLVNVRVKDKGCMNAPEAQAAVEAGKAKLAGRGRILVRPSGTEPLIRVMGEGPDPEELKQVVEAIADVFRRF.

The Phosphoserine intermediate role is filled by S100. Residues S100, D256, D258, and D260 each contribute to the Mg(2+) site. S100 carries the post-translational modification Phosphoserine.

The protein belongs to the phosphohexose mutase family. Mg(2+) serves as cofactor. In terms of processing, activated by phosphorylation.

The catalysed reaction is alpha-D-glucosamine 1-phosphate = D-glucosamine 6-phosphate. Its function is as follows. Catalyzes the conversion of glucosamine-6-phosphate to glucosamine-1-phosphate. This is Phosphoglucosamine mutase from Heliobacterium modesticaldum (strain ATCC 51547 / Ice1).